A 123-amino-acid polypeptide reads, in one-letter code: UPF0102 protein SPO0400 (123 aa).

Belongs to the UPF0102 family.

This Ruegeria pomeroyi (strain ATCC 700808 / DSM 15171 / DSS-3) (Silicibacter pomeroyi) protein is UPF0102 protein SPO0400.